Reading from the N-terminus, the 238-residue chain is MRPDNRAADQVRPIKITRHYTAYAEGSVLVEFGNTKVLCNASIEEGVPRWLKGQGKGWVTAEYGMLPRATHSRTRREATNGKQGGRTMEIQRLIARSLRAVVDLEAMGEIMITVDCDVIQADGGTRTASITGASVALADAFAHLIAKGQLKKNPMKGHVAAVSVGILGEDVLCDLEYVEDSAADTDMNVVMTEEGKMIEIQGTAEGEPFSHEQLLELLAVAKKGIADIVAVQKASLLD.

Phosphate is bound by residues R86 and 124–126; that span reads GTR.

It belongs to the RNase PH family. In terms of assembly, homohexameric ring arranged as a trimer of dimers.

The catalysed reaction is tRNA(n+1) + phosphate = tRNA(n) + a ribonucleoside 5'-diphosphate. Its function is as follows. Phosphorolytic 3'-5' exoribonuclease that plays an important role in tRNA 3'-end maturation. Removes nucleotide residues following the 3'-CCA terminus of tRNAs; can also add nucleotides to the ends of RNA molecules by using nucleoside diphosphates as substrates, but this may not be physiologically important. Probably plays a role in initiation of 16S rRNA degradation (leading to ribosome degradation) during starvation. The sequence is that of Ribonuclease PH from Vibrio cholerae serotype O1 (strain ATCC 39315 / El Tor Inaba N16961).